A 251-amino-acid chain; its full sequence is MILYEYPFNERIRTLLRLEDLFERFAFFLAQEDPREHHVALTTLFEIAEVTGRADLKSDLMKELERQRQTLAPFRGNPGIEQNALEAVLGEIEQTLANLAQMQGKTGQHLVDNEWLASIRSRAVIPGGTCKFDLPSYYAWQQWPAEQRRQDIAKWILPMLPLRDAAAIVLRLARESGQASKVMAMQGSYQQMLSGRSYQLMQVRVPPELRVIPEASANKYMLWVRFTMQDGDVRPRAVDIDVPFHLTLCNL.

Belongs to the ZapD family. In terms of assembly, interacts with FtsZ.

The protein localises to the cytoplasm. Functionally, cell division factor that enhances FtsZ-ring assembly. Directly interacts with FtsZ and promotes bundling of FtsZ protofilaments, with a reduction in FtsZ GTPase activity. The sequence is that of Cell division protein ZapD from Burkholderia orbicola (strain MC0-3).